A 225-amino-acid chain; its full sequence is MKQLLQDSWWNQLKEEFEKPYYQELREMLKREYAEQTIYPDSRDIFNALHYTSYDDVKVVILGQDPYHGPGQAQGLSFSVKPGVKQPPSLKNIFLELQQDIGCSIPNHGSLVSWAKQGVLLLNTVLTVRRGQANSHKGKGWERLTDRIIDVLSERERPVIFILWGRHAQMKKERIDTSKHFIIESTHPSPFSARNGFFGSRPFSRANAYLEKMGEAPIDWCIKDL.

The active-site Proton acceptor is the Asp-65.

The protein belongs to the uracil-DNA glycosylase (UDG) superfamily. UNG family. In terms of assembly, interacts with bacillus phage phi29 protein p56; this interaction inhibits the uracil-DNA glycosylase. Interacts with SSB (ssbA).

The protein localises to the cytoplasm. The catalysed reaction is Hydrolyzes single-stranded DNA or mismatched double-stranded DNA and polynucleotides, releasing free uracil.. Functionally, excises uracil residues from the DNA which can arise as a result of misincorporation of dUMP residues by DNA polymerase or due to deamination of cytosine. The sequence is that of Uracil-DNA glycosylase (ung) from Bacillus subtilis (strain 168).